Consider the following 704-residue polypeptide: Polyribonucleotide nucleotidyltransferase 4 (704 aa).

The Mg(2+) site is built by aspartate 483 and aspartate 489. The KH domain maps to 550-609 (PRVLKMKIHPDKIRDVIGSGGKTINRIIDETGVKIDIDNDGTIFIAAESQEAVEKAIIII). The 69-residue stretch at 619–687 (GQNYTGKVIK…QQGKINLSRK (69 aa)) folds into the S1 motif domain.

This sequence belongs to the polyribonucleotide nucleotidyltransferase family. The cofactor is Mg(2+).

Its subcellular location is the cytoplasm. The enzyme catalyses RNA(n+1) + phosphate = RNA(n) + a ribonucleoside 5'-diphosphate. Involved in mRNA degradation. Catalyzes the phosphorolysis of single-stranded polyribonucleotides processively in the 3'- to 5'-direction. This chain is Polyribonucleotide nucleotidyltransferase 4, found in Alkaliphilus metalliredigens (strain QYMF).